A 490-amino-acid polypeptide reads, in one-letter code: 4-hydroxybutyryl-CoA dehydratase/vinylacetyl-CoA-Delta-isomerase (490 aa).

Residues C99 and C103 each coordinate [4Fe-4S] cluster. FAD-binding positions include 149–156 (MTDPKGDR) and 188–190 (HQT). H292 and C299 together coordinate [4Fe-4S] cluster. Residues H325 and 386 to 390 (DIAGG) each bind FAD.

In terms of assembly, homotetramer. FAD serves as cofactor. [4Fe-4S] cluster is required as a cofactor.

It carries out the reaction 4-hydroxybutanoyl-CoA = (2E)-butenoyl-CoA + H2O. The enzyme catalyses vinylacetyl-CoA = (2E)-butenoyl-CoA. In terms of biological role, catalyzes the reversible conversion of 4-hydroxybutyryl-CoA to crotonyl-CoA. The mechanism of the reaction seems to go through three steps: (1) the FAD-dependent oxidation of 4-hydroxybutyryl-CoA to 4-hydroxycrotonyl-CoA; (2) the hydroxyl group is substituted by a hydride derived from the now reduced FAD in an SN2' reaction leading to vinylacetyl-CoA; (3) isomerization to yield crotonyl-CoA. The chain is 4-hydroxybutyryl-CoA dehydratase/vinylacetyl-CoA-Delta-isomerase (abfD) from Clostridium aminobutyricum.